The primary structure comprises 252 residues: 3-dehydroquinate dehydratase (252 aa).

3-dehydroquinate is bound by residues serine 21, 46 to 48, and arginine 82; that span reads EWR. Histidine 143 acts as the Proton donor/acceptor in catalysis. Lysine 170 acts as the Schiff-base intermediate with substrate in catalysis. Positions 213, 232, and 236 each coordinate 3-dehydroquinate.

Belongs to the type-I 3-dehydroquinase family. As to quaternary structure, homodimer.

The catalysed reaction is 3-dehydroquinate = 3-dehydroshikimate + H2O. It functions in the pathway metabolic intermediate biosynthesis; chorismate biosynthesis; chorismate from D-erythrose 4-phosphate and phosphoenolpyruvate: step 3/7. Involved in the third step of the chorismate pathway, which leads to the biosynthesis of aromatic amino acids. Catalyzes the cis-dehydration of 3-dehydroquinate (DHQ) and introduces the first double bond of the aromatic ring to yield 3-dehydroshikimate. The sequence is that of 3-dehydroquinate dehydratase from Escherichia coli O6:K15:H31 (strain 536 / UPEC).